Consider the following 101-residue polypeptide: Small ribosomal subunit protein uS14 (101 aa).

Belongs to the universal ribosomal protein uS14 family. In terms of assembly, part of the 30S ribosomal subunit. Contacts proteins S3 and S10.

Binds 16S rRNA, required for the assembly of 30S particles and may also be responsible for determining the conformation of the 16S rRNA at the A site. The chain is Small ribosomal subunit protein uS14 from Buchnera aphidicola subsp. Baizongia pistaciae (strain Bp).